The chain runs to 129 residues: ATP synthase epsilon chain (129 aa).

It belongs to the ATPase epsilon chain family. In terms of assembly, F-type ATPases have 2 components, CF(1) - the catalytic core - and CF(0) - the membrane proton channel. CF(1) has five subunits: alpha(3), beta(3), gamma(1), delta(1), epsilon(1). CF(0) has three main subunits: a, b and c.

The protein resides in the cell inner membrane. Its function is as follows. Produces ATP from ADP in the presence of a proton gradient across the membrane. The polypeptide is ATP synthase epsilon chain (Nitratiruptor sp. (strain SB155-2)).